A 304-amino-acid polypeptide reads, in one-letter code: Probable porphobilinogen deaminase (304 aa).

At Cys-240 the chain carries S-(dipyrrolylmethanemethyl)cysteine.

Belongs to the HMBS family. Dipyrromethane is required as a cofactor.

The catalysed reaction is 4 porphobilinogen + H2O = hydroxymethylbilane + 4 NH4(+). It participates in porphyrin-containing compound metabolism; protoporphyrin-IX biosynthesis; coproporphyrinogen-III from 5-aminolevulinate: step 2/4. In terms of biological role, tetrapolymerization of the monopyrrole PBG into the hydroxymethylbilane pre-uroporphyrinogen in several discrete steps. This chain is Probable porphobilinogen deaminase, found in Ignicoccus hospitalis (strain KIN4/I / DSM 18386 / JCM 14125).